The following is a 190-amino-acid chain: Isopentenyl-diphosphate Delta-isomerase (190 aa).

Mn(2+)-binding residues include His-27 and His-34. One can recognise a Nudix hydrolase domain in the interval 32–166 (ALHLAFSCHV…PWAFSPWLTL (135 aa)). The active site involves Cys-69. Position 71 (His-71) interacts with Mn(2+). Glu-89 provides a ligand contact to Mg(2+). Positions 116 and 118 each coordinate Mn(2+). Glu-118 is a catalytic residue.

It belongs to the IPP isomerase type 1 family. Requires Mg(2+) as cofactor. It depends on Mn(2+) as a cofactor.

Its subcellular location is the cytoplasm. The catalysed reaction is isopentenyl diphosphate = dimethylallyl diphosphate. The protein operates within isoprenoid biosynthesis; dimethylallyl diphosphate biosynthesis; dimethylallyl diphosphate from isopentenyl diphosphate: step 1/1. Functionally, catalyzes the 1,3-allylic rearrangement of the homoallylic substrate isopentenyl (IPP) to its highly electrophilic allylic isomer, dimethylallyl diphosphate (DMAPP). This chain is Isopentenyl-diphosphate Delta-isomerase, found in Clavibacter sepedonicus (Clavibacter michiganensis subsp. sepedonicus).